The chain runs to 193 residues: Large ribosomal subunit protein uL5 (193 aa).

This sequence belongs to the universal ribosomal protein uL5 family. In terms of assembly, part of the 50S ribosomal subunit; part of the 5S rRNA/L5/L18/L25 subcomplex. Contacts the 5S rRNA and the P site tRNA. Forms a bridge to the 30S subunit in the 70S ribosome.

This is one of the proteins that bind and probably mediate the attachment of the 5S RNA into the large ribosomal subunit, where it forms part of the central protuberance. In the 70S ribosome it contacts protein S13 of the 30S subunit (bridge B1b), connecting the 2 subunits; this bridge is implicated in subunit movement. Contacts the P site tRNA; the 5S rRNA and some of its associated proteins might help stabilize positioning of ribosome-bound tRNAs. This Arthrobacter sp. (strain FB24) protein is Large ribosomal subunit protein uL5.